Reading from the N-terminus, the 236-residue chain is Rho-related GTP-binding protein RhoV (236 aa).

A disordered region spans residues 1-28; sequence MPPRELSEAEPPPLPASTPPPRRRSAPP. Over residues 10 to 20 the composition is skewed to pro residues; the sequence is EPPPLPASTPP. Phosphoserine is present on Ser25. GTP is bound by residues 38–45, 85–89, and 143–146; these read GDGAVGKS, DTAGQ, and TQAD. Cys234 carries S-palmitoyl cysteine lipidation.

Belongs to the small GTPase superfamily. Rho family. Interacts with PAK2. Mg(2+) is required as a cofactor. As to expression, highly expressed in brain and testis and at lower levels in spleen and lung.

The protein resides in the cell membrane. It is found in the endosome membrane. Its function is as follows. Plays a role in the control of the actin cytoskeleton via activation of the JNK pathway. The sequence is that of Rho-related GTP-binding protein RhoV from Rattus norvegicus (Rat).